The sequence spans 317 residues: ADIPOR-like receptor IZH2 (317 aa).

Residues 1 to 78 lie on the Cytoplasmic side of the membrane; the sequence is MSTLLERTKS…TFKSLFYLHN (78 aa). A helical membrane pass occupies residues 79-99; sequence ESVNIYSHLIPALGFFTVLLL. Over 100–110 the chain is Extracellular; that stretch reads DKSTIKVFATT. The helical transmembrane segment at 111–131 threads the bilayer; that stretch reads TWLDHMVIDLFYSGAFACLIL. The Cytoplasmic portion of the chain corresponds to 132–153; the sequence is SSSFHCLKSHSLRIATLGNKLD. A helical transmembrane segment spans residues 154 to 174; sequence YLGICILIVTSMVSILYYGYF. Residues 175-176 are Extracellular-facing; that stretch reads EK. A helical membrane pass occupies residues 177 to 197; the sequence is FSLFCLFALITVSFGIACSIV. Residues 198–212 are Cytoplasmic-facing; that stretch reads SLKDKFRKREWRPYR. The helical transmembrane segment at 213 to 233 threads the bilayer; that stretch reads AGLFVCFGLSSIIPIFSGLYC. Topologically, residues 234-242 are extracellular; the sequence is YSFSEIWTQ. Residues 243–263 traverse the membrane as a helical segment; sequence IQLFWVLLGGVLYIIGAVLYG. The Cytoplasmic segment spans residues 264–276; sequence MRFPEKICPGKFD. Residues 277–297 traverse the membrane as a helical segment; that stretch reads IWGHSHQLFHFLVVIAALCHL. At 298-317 the chain is on the extracellular side; it reads RGLLNSYELVHIKMENGIVS.

The protein belongs to the ADIPOR family.

Its subcellular location is the membrane. Probable receptor, which is involved in metabolic pathways that regulate lipid metabolism such as fatty acid oxidation. The protein is ADIPOR-like receptor IZH2 (IZH2) of Saccharomyces cerevisiae (strain ATCC 204508 / S288c) (Baker's yeast).